A 252-amino-acid chain; its full sequence is MNTSLIEITVAEIKELADVEPKQASKRFELIATTMNDEQLVEVIEKMDIVTLTQINSHHDISCPSIMSELMTPEQIRDIVCQQPLYWEEKIKNNAEELIQHTFDFLTYLIRIQDSEEKQTAILECIAEDPAGLFYLSIPFIEMMLGEGHDDEDHINDYYDDEEDTDTIGYDSRVASEEAHSFSLDDPRSLMALIHELAPDVEKAIKNLLRNESSGWETIINKFVNELVIQAKEKNQVTDEYAEVDDMFSFLD.

Interacts with AtcC, but not with AtcA and AtcJ. Interacts with the RNA polymerase subunits RpoB and RpoC.

Involved in cold adaptation. Directly interacts with the RNA polymerase and decreases its activity. May direct the DnaK chaperone to the RNA polymerase to sustain life at low temperatures. Overproduction prevents bacterial growth due to RNA polymerase inhibition. The chain is Adaptation to cold protein B from Shewanella oneidensis (strain ATCC 700550 / JCM 31522 / CIP 106686 / LMG 19005 / NCIMB 14063 / MR-1).